A 303-amino-acid polypeptide reads, in one-letter code: Tyrosine recombinase XerC (303 aa).

The Core-binding (CB) domain occupies 6–92 (ASLAPQVEAF…ALRSFLNWLV (87 aa)). A Tyr recombinase domain is found at 113-292 (HLPKNIDVDE…DFQHLATVYD (180 aa)). Catalysis depends on residues Arg-152, Lys-176, His-244, Arg-247, and His-270. Tyr-279 acts as the O-(3'-phospho-DNA)-tyrosine intermediate in catalysis.

The protein belongs to the 'phage' integrase family. XerC subfamily. Forms a cyclic heterotetrameric complex composed of two molecules of XerC and two molecules of XerD, in which XerC interacts with XerD via its C-terminal region, XerD interacts with XerC via its C-terminal region and so on.

Its subcellular location is the cytoplasm. Its activity is regulated as follows. FtsK may regulate the catalytic switch between XerC and XerD in the heterotetrameric complex during the two steps of the recombination process. Functionally, site-specific tyrosine recombinase, which acts by catalyzing the cutting and rejoining of the recombining DNA molecules. Binds cooperatively to specific DNA consensus sequences that are separated from XerD binding sites by a short central region, forming the heterotetrameric XerC-XerD complex that recombines DNA substrates. The complex is essential to convert dimers of the bacterial chromosome into monomers to permit their segregation at cell division. It also contributes to the segregational stability of plasmids. In the complex XerC specifically exchanges the top DNA strands. The sequence is that of Tyrosine recombinase XerC from Yersinia pestis.